Reading from the N-terminus, the 649-residue chain is Sodium/nucleoside cotransporter 1 (649 aa).

Residues 1 to 80 (MENDPSRRRE…ARSFCREHMQ (80 aa)) are Cytoplasmic-facing. A helical transmembrane segment spans residues 81 to 104 (LFRWIGTGLLCTGLSAFLLVACLL). Topologically, residues 105-109 (DFQRA) are extracellular. Residues 110-128 (LALFVLTCVVLTFLGHRLL) form a helical membrane-spanning segment. Over 129–147 (KRLLGPKLRRFLKPQGHPR) the chain is Cytoplasmic. The helical transmembrane segment at 148–167 (LLLWFKRGLALAAFLGLVLW) threads the bilayer. Residues 168–178 (LSLDTSQRPEQ) lie on the Extracellular side of the membrane. Residues 179-195 (LVSFAGICVFVALLFAC) traverse the membrane as a helical segment. At 196–201 (SKHHCA) the chain is on the cytoplasmic side. The helical transmembrane segment at 202 to 222 (VSWRAVSWGLGLQFVLGLLVI) threads the bilayer. The Extracellular segment spans residues 223-261 (RTEPGFIAFEWLGEQIRIFLSYTKAGSSFVFGEALVKDV). The chain crosses the membrane as a helical span at residues 262–283 (FAFQVLPIIVFFSCVISVLYHV). Over 284 to 294 (GLMQWVILKIA) the chain is Cytoplasmic. The chain crosses the membrane as a helical span at residues 295 to 318 (WLMQVTMGTTATETLSVAGNIFVS). Residues 319-337 (QTEAPLLIRPYLADMTLSE) are Extracellular-facing. Residues 338–360 (VHVVMTGGYATIAGSLLGAYISF) form a helical membrane-spanning segment. At 361-366 (GIDATS) the chain is on the cytoplasmic side. Residues 367 to 386 (LIAASVMAAPCALALSKLVY) traverse the membrane as a helical segment. Over 387–423 (PEVEESKFRREEGVKLTYGDAQNLIEAASTGAAISVK) the chain is Extracellular. The helical transmembrane segment at 424–446 (VVANIAANLIAFLAVLDFINAAL) threads the bilayer. Topologically, residues 447–457 (SWLGDMVDIQG) are cytoplasmic. Residues 458–479 (LSFQLICSYILRPVAFLMGVAW) traverse the membrane as a helical segment. Over 480-534 (EDCPVVAELLGIKLFLNEFVAYQDLSKYKQRRLAGAEEWVGDRKQWISVRAEVLT) the chain is Extracellular. A helical transmembrane segment spans residues 535-558 (TFALCGFANFSSIGIMLGGLTSMV). Residues 559-569 (PQRKSDFSQIV) lie on the Cytoplasmic side of the membrane. Residues 570–592 (LRALFTGACVSLVNACMAGILYM) traverse the membrane as a helical segment. Residues 593–649 (PRGAEVDCMSLLNTTLSSSSFEIYQCCREAFQSVNPEFSPEALDNCCRFYNHTICAQ) lie on the Extracellular side of the membrane. N-linked (GlcNAc...) asparagine glycosylation is found at N605 and N643.

This sequence belongs to the concentrative nucleoside transporter (CNT) (TC 2.A.41) family. In terms of processing, N-glycosylated. N-glycosylation is required for localization to the plasma membrane and the transporter activity. Expressed in kidney.

The protein localises to the cell membrane. Its subcellular location is the apical cell membrane. It catalyses the reaction uridine(out) + Na(+)(out) = uridine(in) + Na(+)(in). The enzyme catalyses thymidine(out) + Na(+)(out) = thymidine(in) + Na(+)(in). It carries out the reaction cytidine(out) + Na(+)(out) = cytidine(in) + Na(+)(in). The catalysed reaction is adenosine(out) + Na(+)(out) = adenosine(in) + Na(+)(in). Due to its high apparent affinity but slow transport, adenosine could act as a negative regulator of pyrimidine transport under some conditions. Its function is as follows. Sodium and pyrimidine nucleoside symporter of the plasma membrane that imports uridine, thymidine and cytidine into cells by coupling their transport to the transmembrane sodium electrochemical gradient. Also transports adenosine, an atypical substrate transported with high apparent affinity, but low maximum velocity. Therefore, exhibits the transport characteristics of the nucleoside transport system cit or N2 subtype (N2/cit). Involved in renal nucleoside (re)absorption. This chain is Sodium/nucleoside cotransporter 1, found in Homo sapiens (Human).